A 222-amino-acid chain; its full sequence is Acyl-protein thioesterase 1 homolog 2 (222 aa).

Catalysis depends on charge relay system residues Ser-116, Asp-169, and His-202.

This sequence belongs to the AB hydrolase superfamily. AB hydrolase 2 family.

It is found in the cytoplasm. It localises to the nucleus. The catalysed reaction is S-hexadecanoyl-L-cysteinyl-[protein] + H2O = L-cysteinyl-[protein] + hexadecanoate + H(+). Its function is as follows. Hydrolyzes fatty acids from S-acylated cysteine residues in proteins with a strong preference for palmitoylated G-alpha proteins over other acyl substrates. Mediates the deacylation of G-alpha proteins such as GPA1 in vivo, but has weak or no activity toward palmitoylated Ras proteins. Has weak lysophospholipase activity in vitro; however such activity may not exist in vivo. This Dictyostelium discoideum (Social amoeba) protein is Acyl-protein thioesterase 1 homolog 2.